The following is a 405-amino-acid chain: Probable tRNA sulfurtransferase (405 aa).

The 106-residue stretch at E60–V165 folds into the THUMP domain. ATP-binding positions include M183–L184, H208–F209, R265, G287, and Q296.

This sequence belongs to the ThiI family.

It localises to the cytoplasm. The catalysed reaction is [ThiI sulfur-carrier protein]-S-sulfanyl-L-cysteine + a uridine in tRNA + 2 reduced [2Fe-2S]-[ferredoxin] + ATP + H(+) = [ThiI sulfur-carrier protein]-L-cysteine + a 4-thiouridine in tRNA + 2 oxidized [2Fe-2S]-[ferredoxin] + AMP + diphosphate. It carries out the reaction [ThiS sulfur-carrier protein]-C-terminal Gly-Gly-AMP + S-sulfanyl-L-cysteinyl-[cysteine desulfurase] + AH2 = [ThiS sulfur-carrier protein]-C-terminal-Gly-aminoethanethioate + L-cysteinyl-[cysteine desulfurase] + A + AMP + 2 H(+). Its pathway is cofactor biosynthesis; thiamine diphosphate biosynthesis. Its function is as follows. Catalyzes the ATP-dependent transfer of a sulfur to tRNA to produce 4-thiouridine in position 8 of tRNAs, which functions as a near-UV photosensor. Also catalyzes the transfer of sulfur to the sulfur carrier protein ThiS, forming ThiS-thiocarboxylate. This is a step in the synthesis of thiazole, in the thiamine biosynthesis pathway. The sulfur is donated as persulfide by IscS. The protein is Probable tRNA sulfurtransferase of Latilactobacillus sakei subsp. sakei (strain 23K) (Lactobacillus sakei subsp. sakei).